A 328-amino-acid polypeptide reads, in one-letter code: 3-dehydroquinate synthase (328 aa).

It belongs to the archaeal-type DHQ synthase family.

The enzyme catalyses 2-amino-2,3,7-trideoxy-D-lyxo-hept-6-ulosonate + NAD(+) + H2O = 3-dehydroquinate + NH4(+) + NADH + H(+). Catalyzes the oxidative deamination and cyclization of 2-amino-3,7-dideoxy-D-threo-hept-6-ulosonic acid (ADH) to yield 3-dehydroquinate (DHQ), which is fed into the canonical shikimic pathway of aromatic amino acid biosynthesis. This is 3-dehydroquinate synthase from Methanoculleus marisnigri (strain ATCC 35101 / DSM 1498 / JR1).